Here is a 398-residue protein sequence, read N- to C-terminus: O-methyltransferase mpaG' (398 aa).

Residue Ser-144 coordinates (4E,8E)-10-(4,6-dihydroxy-7-methyl-3-oxo-1,3-dihydro-2-benzofuran-5-yl)-4,8-dimethyldeca-4,8-dienoate. A 4-farnesyl-3,5-dihydroxy-6-methylphthalide-binding site is contributed by Ser-144. Ser-144 contacts 6-O-desmethylmycophenolate. Asn-197 is a binding site for S-adenosyl-L-homocysteine. (4E,8E)-10-(4,6-dihydroxy-7-methyl-3-oxo-1,3-dihydro-2-benzofuran-5-yl)-4,8-dimethyldeca-4,8-dienoate is bound at residue Tyr-199. Tyr-199 contacts 4-farnesyl-3,5-dihydroxy-6-methylphthalide. Tyr-199 contacts 6-O-desmethylmycophenolate. S-adenosyl-L-homocysteine-binding residues include Tyr-203, Asp-237, Gly-239, His-244, Asp-245, Asp-264, and Arg-265. Asp-264 contributes to the S-adenosyl-L-methionine binding site. The (4E,8E)-10-(4,6-dihydroxy-7-methyl-3-oxo-1,3-dihydro-2-benzofuran-5-yl)-4,8-dimethyldeca-4,8-dienoate site is built by Arg-265 and Gln-267. Arg-265 serves as a coordination point for 6-O-desmethylmycophenolate. Asp-286, Ile-287, and His-302 together coordinate S-adenosyl-L-homocysteine. Ser-303 provides a ligand contact to (4E,8E)-10-(4,6-dihydroxy-7-methyl-3-oxo-1,3-dihydro-2-benzofuran-5-yl)-4,8-dimethyldeca-4,8-dienoate. Ser-303 is a 4-farnesyl-3,5-dihydroxy-6-methylphthalide binding site. A 6-O-desmethylmycophenolate-binding site is contributed by Ser-303. The active-site Proton acceptor is the His-306. Active-site residues include Glu-335 and Glu-362.

It belongs to the class I-like SAM-binding methyltransferase superfamily. Cation-independent O-methyltransferase family. In terms of assembly, homodimer.

It is found in the cytoplasm. Its subcellular location is the cytosol. The catalysed reaction is (4E,8E)-10-(4,6-dihydroxy-7-methyl-3-oxo-1,3-dihydro-2-benzofuran-5-yl)-4,8-dimethyldeca-4,8-dienoate + S-adenosyl-L-methionine = (4E,8E)-10-(4-hydroxy-6-methoxy-7-methyl-3-oxo-1,3-dihydro-2-benzofuran-5-yl)-4,8-dimethyldeca-4,8-dienoate + S-adenosyl-L-homocysteine + H(+). The enzyme catalyses 4-farnesyl-3,5-dihydroxy-6-methylphthalide + S-adenosyl-L-methionine = 4-farnesyl-3,5-dihydroxy-6-methoxylphthalide + S-adenosyl-L-homocysteine + H(+). It carries out the reaction 6-O-desmethylmycophenolate + S-adenosyl-L-methionine = mycophenolate + S-adenosyl-L-homocysteine + H(+). Its pathway is secondary metabolite biosynthesis; terpenoid biosynthesis. Its function is as follows. O-methyltransferase; part of the gene cluster that mediates the biosynthesis of mycophenolic acid (MPA), the first isolated antibiotic natural product in the world obtained from a culture of Penicillium brevicompactum in 1893. MpaG' catalyzes the 5-O-methylation of three precursors in MPA biosynthesis including demethylmycophenolic acid (DMMPA), 4-farnesyl-3,5-dihydroxy-6-methylphthalide (FDHMP), and an intermediate containing three fewer carbon atoms compared to FDHMP (FDHMP-3C) with different catalytic efficiencies. The first step of the pathway is the synthesis of 5-methylorsellinic acid (5MOA) by the cytosolic polyketide synthase mpaC. 5MOA is then converted to the phthalide compound 5,7-dihydroxy-4,6-dimethylphthalide (DHMP) by the endoplasmic reticulum-bound cytochrome P450 monooxygenase mpaDE. MpaDE first catalyzes hydroxylation of 5-MOA to 4,6-dihydroxy-2-(hydroxymethyl)-3-methylbenzoic acid (DHMB). MpaDE then acts as a lactone synthase that catalyzes the ring closure to convert DHMB into DHMP. The next step is the prenylation of DHMP by the Golgi apparatus-associated prenyltransferase mpaA to yield farnesyl-DHMP (FDHMP). The ER-bound oxygenase mpaB then mediates the oxidative cleavage the C19-C20 double bond in FDHMP to yield FDHMP-3C via a mycophenolic aldehyde intermediate. The O-methyltransferase mpaG catalyzes the methylation of FDHMP-3C to yield MFDHMP-3C. MpaG and mpaB can also switch the order in which they act and, in this case, the conversion of FDHMP to MFDHMP-3C can take place via 5-O-methyl-FDHMP (MFDHMP). After the cytosolic methylation of FDHMP-3C, MFDHMP-3C enters into peroxisomes probably via free diffusion due to its low molecular weight. Upon a peroxisomal CoA ligation reaction, catalyzed by a beta-oxidation component enzyme acyl-CoA ligase ACL891, MFDHMP-3C-CoA would then be restricted to peroxisomes for the following beta-oxidation pathway steps. The peroxisomal beta-oxidation machinery than converts MFDHMP-3C-CoA into MPA_CoA, via a beta-oxidation chain-shortening process. Finally mpaH acts as a peroxisomal acyl-CoA hydrolase with high substrate specificity toward MPA-CoA to release the final product MPA. MpaH can also hydrolyze DMMPA-CoA to release demethylmycophenolic acid (DMMPA) that is further converted to MPA by mpaG. The chain is O-methyltransferase mpaG' from Penicillium brevicompactum.